The primary structure comprises 1142 residues: SNF1-activating kinase 1 (1142 aa).

Residues 22–41 (ELEKSGTSSSVSLRSPTKSS) are disordered. A Phosphothreonine modification is found at T43. The span at 82 to 93 (QHQQHISSSLAK) shows a compositional bias: polar residues. The interval 82–107 (QHQQHISSSLAKTPTTTSSFCSSGSS) is disordered. Low complexity predominate over residues 94 to 107 (TPTTTSSFCSSGSS). The Protein kinase domain occupies 133 to 448 (YEIIKELGHG…IPAIKKHPFV (316 aa)). ATP is bound by residues 139-147 (LGHGQHGKV) and K162. The active-site Proton acceptor is D277. Disordered stretches follow at residues 634–678 (SPEA…VLPQ), 694–799 (NSLL…NSPI), 825–875 (SHFN…AYSE), 919–971 (KSSL…QKGS), 1005–1027 (SQPI…KATT), and 1066–1142 (STNA…SALP). Residues 640–656 (SVSSVPNLPSAPSSTRL) show a composition bias toward polar residues. Residues 694 to 706 (NSLLRNSSSHLTS) are compositionally biased toward low complexity. Residues 707-741 (YNSGRPSSRTGRMNSRNQNLPKIPNSLSKISTTKL) show a composition bias toward polar residues. The segment covering 742 to 751 (TELRVPKDSE) has biased composition (basic and acidic residues). Polar residues predominate over residues 785 to 799 (NINSSDKSGSKNSPI). Low complexity-rich tracts occupy residues 835-868 (SSQS…RNSS) and 920-936 (SSLN…SSSS). Residues 958 to 971 (SKLSELSNSPQKGS) show a composition bias toward polar residues. S964 is modified (phosphoserine). The span at 1096 to 1111 (NDEHARNTSCHGDKGQ) shows a compositional bias: basic and acidic residues. S1126 carries the phosphoserine modification. Residues 1133-1142 (NEEKRRSALP) are compositionally biased toward basic and acidic residues.

It belongs to the protein kinase superfamily. Ser/Thr protein kinase family. Associates with the SNF1 kinase complex. Interacts with SNF1 and REG1. In terms of processing, autophosphorylated.

It localises to the cytoplasm. It catalyses the reaction L-seryl-[protein] + ATP = O-phospho-L-seryl-[protein] + ADP + H(+). The enzyme catalyses L-threonyl-[protein] + ATP = O-phospho-L-threonyl-[protein] + ADP + H(+). Functionally, serine/threonine-protein kinase that phosphorylates SNF1, the catalytic subunit of the SNF1 kinase complex. Acts as an activator of the SNF1 kinase complex and controls its nuclear localization upon glucose and nitrogen depletion. Also required for SNF1 kinase activation under other stress conditions like alkaline pH or presence of cadmium. The polypeptide is SNF1-activating kinase 1 (SAK1) (Saccharomyces cerevisiae (strain ATCC 204508 / S288c) (Baker's yeast)).